The sequence spans 441 residues: tRNA-2-methylthio-N(6)-dimethylallyladenosine synthase (441 aa).

One can recognise an MTTase N-terminal domain in the interval 2–117 (KGLYIKSYGC…LPELLVKAHR (116 aa)). Cys-11, Cys-47, Cys-80, Cys-157, Cys-161, and Cys-164 together coordinate [4Fe-4S] cluster. One can recognise a Radical SAM core domain in the interval 143–374 (KNQETSAFIS…QKLLREQQLA (232 aa)).

This sequence belongs to the methylthiotransferase family. MiaB subfamily. Monomer. It depends on [4Fe-4S] cluster as a cofactor.

It localises to the cytoplasm. The catalysed reaction is N(6)-dimethylallyladenosine(37) in tRNA + (sulfur carrier)-SH + AH2 + 2 S-adenosyl-L-methionine = 2-methylsulfanyl-N(6)-dimethylallyladenosine(37) in tRNA + (sulfur carrier)-H + 5'-deoxyadenosine + L-methionine + A + S-adenosyl-L-homocysteine + 2 H(+). Functionally, catalyzes the methylthiolation of N6-(dimethylallyl)adenosine (i(6)A), leading to the formation of 2-methylthio-N6-(dimethylallyl)adenosine (ms(2)i(6)A) at position 37 in tRNAs that read codons beginning with uridine. The chain is tRNA-2-methylthio-N(6)-dimethylallyladenosine synthase from Ehrlichia canis (strain Jake).